A 693-amino-acid chain; its full sequence is Golgin subfamily A member 6B (693 aa).

The span at 1 to 11 (MWPQPYLPPHP) shows a compositional bias: pro residues. Disordered regions lie at residues 1–72 (MWPQ…SQYQ), 497–551 (LPGE…VERR), 629–650 (NPAD…AGEQ), and 660–679 (NNVE…DNPT). Residues 77-611 (ALESSSVTIS…KLLELQELVL (535 aa)) are a coiled coil. Basic and acidic residues predominate over residues 537 to 551 (LPKEKADGTEQVERR).

The protein belongs to the GOLGA6 family.

This Homo sapiens (Human) protein is Golgin subfamily A member 6B (GOLGA6B).